The sequence spans 496 residues: Hexokinase-1 (496 aa).

Residues 4 to 24 traverse the membrane as a helical segment; that stretch reads VAVGATVVCTAAVCAVAVLVV. One can recognise a Hexokinase domain in the interval 35-487; the sequence is GRVLAILKAF…SGIGAALLAA (453 aa). The tract at residues 90-228 is hexokinase small subdomain; it reads SGDEKGLFYA…GLDMRIAALV (139 aa). ADP is bound by residues glycine 104, threonine 105, and asparagine 106. Residues threonine 194, lysine 195, asparagine 229, and aspartate 230 each contribute to the D-glucose site. Residues 229–476 are hexokinase large subdomain; sequence NDTVGTLAGG…GSVEVTHSND (248 aa). Residue threonine 253 coordinates ADP. Residues asparagine 256, glutamate 284, and glutamate 315 each contribute to the D-glucose site. Glycine 441 lines the ADP pocket.

Belongs to the hexokinase family. Interacts with RPT5B in nucleus. Interacts with RHIP1. Interacts with KING1 in mitochondria. Interacts with CLF (via SANT domain) and EZA1/SWN (via SANT domain) in nucleus. As to expression, highly expressed in flowers and siliques, at intermediate levels in roots and stems, and at lower levels in rosette and cauline leaves.

It localises to the mitochondrion outer membrane. The protein localises to the nucleus. The catalysed reaction is a D-hexose + ATP = a D-hexose 6-phosphate + ADP + H(+). It catalyses the reaction D-fructose + ATP = D-fructose 6-phosphate + ADP + H(+). It carries out the reaction D-glucose + ATP = D-glucose 6-phosphate + ADP + H(+). It participates in carbohydrate metabolism; hexose metabolism. Its pathway is carbohydrate degradation; glycolysis; D-glyceraldehyde 3-phosphate and glycerone phosphate from D-glucose: step 1/4. Fructose and glucose phosphorylating enzyme. May be involved in the phosphorylation of glucose during the export from mitochondrion to cytosol. Acts as a sugar sensor which may regulate sugar-dependent gene repression or activation. Mediates the effects of sugar on plant growth and development independently of its catalytic activity or the sugar metabolism. May regulate the execution of program cell death in plant cells. Promotes roots and leaves growth. Together with sugar, is involved in the regulation of the expression of aquaporin genes, and reduces leaf water conductance, to coordinate sugar levels with the loss of water through transpiration. Regulates cell proliferation and expansion early during leaf development. Involved in sucrose-induced leaf growth stimulation independently of GPT2. May participate to the stimulation of hypocotyl elongation under long-day (LD) conditions. Forms a nuclear complex with CLF and EZA1/SWN to target common glucose-responsive genes and regulate glucose signaling. Is required for CLF- and EZA1/SWN-mediated histone H3 trimethylation on 'Lys-27' (H3K27me3) and glucose-mediated gene repression. In Arabidopsis thaliana (Mouse-ear cress), this protein is Hexokinase-1.